The chain runs to 463 residues: Ribosomal protein uS12 methylthiotransferase RimO (463 aa).

The region spanning 15-130 is the MTTase N-terminal domain; that stretch reads PKVGMVSLGC…VMQAVHSHLP (116 aa). 6 residues coordinate [4Fe-4S] cluster: C24, C60, C89, C161, C165, and C168. The Radical SAM core domain maps to 147–392; sequence LTPRHYAYLK…MEVAEEVSAA (246 aa). Residues 395–463 form the TRAM domain; sequence ARKIGKTLKV…ADSHDLWGEV (69 aa).

Belongs to the methylthiotransferase family. RimO subfamily. Requires [4Fe-4S] cluster as cofactor.

It is found in the cytoplasm. It catalyses the reaction L-aspartate(89)-[ribosomal protein uS12]-hydrogen + (sulfur carrier)-SH + AH2 + 2 S-adenosyl-L-methionine = 3-methylsulfanyl-L-aspartate(89)-[ribosomal protein uS12]-hydrogen + (sulfur carrier)-H + 5'-deoxyadenosine + L-methionine + A + S-adenosyl-L-homocysteine + 2 H(+). Its function is as follows. Catalyzes the methylthiolation of an aspartic acid residue of ribosomal protein uS12. The protein is Ribosomal protein uS12 methylthiotransferase RimO of Burkholderia pseudomallei (strain 668).